The sequence spans 107 residues: Magnetosome protein MmsF (107 aa).

At 1–13 (MTEAILRSTLGAR) the chain is on the cytoplasmic side. The chain crosses the membrane as a helical span at residues 14 to 34 (TTVMAALSYLSVLCFVPLLVD). At 35–46 (RDDEFVYFHAKQ) the chain is on the lumenal side. Residues 47-67 (GLVIWMWGVLALFALHVPVLG) form a helical membrane-spanning segment. Residues 68–69 (KW) lie on the Cytoplasmic side of the membrane. Residues 70 to 90 (IFGFSSMGVLVFSLLGLVSVV) form a helical membrane-spanning segment. The Lumenal portion of the chain corresponds to 91–107 (FQRAWKLPLISWVAHRI).

The protein belongs to the magnetosome MamF/MmsF protein family. May oligomerize.

It is found in the magnetosome membrane. With respect to regulation, its function may be negatively regulated by one of the MamGFDC proteins. Functionally, plays a major role in synthesis of cubooctahedral magnetite crystals by controlling crystal growth and morphology after nucleation. Has a partially redundant function with MamF. When overexpressed in E.coli the soluble protein self assembles into shells of about 36 nm. This protein mediates the formation of magnetite nanoparticles from a solution of Fe(2+) and Fe(3+) sulfate; the crystals are larger and lack alternative iron oxide/oxyhydroxide species seen in the protein's absence. The sequence is that of Magnetosome protein MmsF from Paramagnetospirillum magneticum (strain ATCC 700264 / AMB-1) (Magnetospirillum magneticum).